We begin with the raw amino-acid sequence, 107 residues long: Nucleoid-associated protein RF_1365 (107 aa).

Belongs to the YbaB/EbfC family. In terms of assembly, homodimer.

It is found in the cytoplasm. Its subcellular location is the nucleoid. Binds to DNA and alters its conformation. May be involved in regulation of gene expression, nucleoid organization and DNA protection. The protein is Nucleoid-associated protein RF_1365 of Rickettsia felis (strain ATCC VR-1525 / URRWXCal2) (Rickettsia azadi).